Reading from the N-terminus, the 555-residue chain is Glypican-6 (555 aa).

The signal sequence occupies residues 1 to 23 (MPSWIGAVILPLLGLLLSLPAGA). Residues 348–357 (PALRSARSAP) show a composition bias toward low complexity. The segment at 348-376 (PALRSARSAPENFNTRFRPYNPEERPTTA) is disordered. S529 carries the GPI-anchor amidated serine lipid modification. Residues 530–555 (SAAQRGHSLLSWSLTCIVLALQRLCR) constitute a propeptide, removed in mature form.

This sequence belongs to the glypican family.

The protein resides in the cell membrane. It is found in the secreted. It localises to the extracellular space. Its function is as follows. Cell surface proteoglycan that bears heparan sulfate. Putative cell surface coreceptor for growth factors, extracellular matrix proteins, proteases and anti-proteases. Enhances migration and invasion of cancer cells through WNT5A signaling. This Pongo abelii (Sumatran orangutan) protein is Glypican-6 (GPC6).